The following is a 158-amino-acid chain: MQGRLSAWLVKHGLIHRSLGFDYQGIETLQIKPEDWHSIAVIFYVYGYNYLRSQCAYDVAPGGLLASVYHLTRIEDGVAQPEELCIKVFASRRNPRIPSVFWVWKSVDFQERESYDMLGISYDNHPRLKRILMPESWIGWPLRKDYIAPNFYEIQDAH.

The protein belongs to the complex I 30 kDa subunit family. In terms of assembly, NDH is composed of at least 16 different subunits, 5 of which are encoded in the nucleus.

It localises to the plastid. It is found in the chloroplast thylakoid membrane. The catalysed reaction is a plastoquinone + NADH + (n+1) H(+)(in) = a plastoquinol + NAD(+) + n H(+)(out). It catalyses the reaction a plastoquinone + NADPH + (n+1) H(+)(in) = a plastoquinol + NADP(+) + n H(+)(out). NDH shuttles electrons from NAD(P)H:plastoquinone, via FMN and iron-sulfur (Fe-S) centers, to quinones in the photosynthetic chain and possibly in a chloroplast respiratory chain. The immediate electron acceptor for the enzyme in this species is believed to be plastoquinone. Couples the redox reaction to proton translocation, and thus conserves the redox energy in a proton gradient. The protein is NAD(P)H-quinone oxidoreductase subunit J, chloroplastic of Solanum lycopersicum (Tomato).